The primary structure comprises 195 residues: Molybdenum cofactor guanylyltransferase (195 aa).

GTP-binding positions include 10–12 (LAG), lysine 23, asparagine 51, aspartate 69, and aspartate 99. A Mg(2+)-binding site is contributed by aspartate 99.

Belongs to the MobA family. In terms of assembly, monomer. Mg(2+) is required as a cofactor.

It is found in the cytoplasm. It carries out the reaction Mo-molybdopterin + GTP + H(+) = Mo-molybdopterin guanine dinucleotide + diphosphate. Functionally, transfers a GMP moiety from GTP to Mo-molybdopterin (Mo-MPT) cofactor (Moco or molybdenum cofactor) to form Mo-molybdopterin guanine dinucleotide (Mo-MGD) cofactor. The polypeptide is Molybdenum cofactor guanylyltransferase (Yersinia pestis bv. Antiqua (strain Antiqua)).